Here is a 131-residue protein sequence, read N- to C-terminus: Small ribosomal subunit protein uS8 (131 aa).

Belongs to the universal ribosomal protein uS8 family. As to quaternary structure, part of the 30S ribosomal subunit. Contacts proteins S5 and S12.

Its function is as follows. One of the primary rRNA binding proteins, it binds directly to 16S rRNA central domain where it helps coordinate assembly of the platform of the 30S subunit. The protein is Small ribosomal subunit protein uS8 of Legionella pneumophila subsp. pneumophila (strain Philadelphia 1 / ATCC 33152 / DSM 7513).